Reading from the N-terminus, the 255-residue chain is Probable transcriptional regulatory protein PCC8801_2028 (255 aa).

Belongs to the TACO1 family.

Its subcellular location is the cytoplasm. The polypeptide is Probable transcriptional regulatory protein PCC8801_2028 (Rippkaea orientalis (strain PCC 8801 / RF-1) (Cyanothece sp. (strain PCC 8801))).